Here is a 256-residue protein sequence, read N- to C-terminus: Bialaphos biosynthetic pathway regulatory protein (256 aa).

One can recognise an HTH luxR-type domain in the interval 184 to 249; the sequence is ETADAIDVSD…QLGARAAECR (66 aa). Positions 208 to 227 form a DNA-binding region, H-T-H motif; it reads DVAMARSLGISTRTLRRVIT.

In terms of biological role, involved in the regulation of the biosynthesis of phosphinothricin tripeptide (PTT), also known as bialaphos (BA), a natural-product antibiotic and potent herbicide. In Streptomyces hygroscopicus, this protein is Bialaphos biosynthetic pathway regulatory protein (brpA).